Reading from the N-terminus, the 296-residue chain is 33 kDa chaperonin (296 aa).

2 disulfides stabilise this stretch: cysteine 238/cysteine 240 and cysteine 271/cysteine 274.

This sequence belongs to the HSP33 family. In terms of processing, under oxidizing conditions two disulfide bonds are formed involving the reactive cysteines. Under reducing conditions zinc is bound to the reactive cysteines and the protein is inactive.

Its subcellular location is the cytoplasm. Redox regulated molecular chaperone. Protects both thermally unfolding and oxidatively damaged proteins from irreversible aggregation. Plays an important role in the bacterial defense system toward oxidative stress. This chain is 33 kDa chaperonin, found in Clostridium botulinum (strain ATCC 19397 / Type A).